A 566-amino-acid polypeptide reads, in one-letter code: Chaperonin GroEL 1 (566 aa).

ATP contacts are provided by residues Thr29–Pro32, Asp86–Thr90, Gly413, and Asp492. Positions Asp520–Gly540 are disordered. Residues Gly529–Gly540 are compositionally biased toward gly residues.

This sequence belongs to the chaperonin (HSP60) family. As to quaternary structure, forms a cylinder of 14 subunits composed of two heptameric rings stacked back-to-back. Interacts with the co-chaperonin GroES.

It is found in the cytoplasm. It carries out the reaction ATP + H2O + a folded polypeptide = ADP + phosphate + an unfolded polypeptide.. In terms of biological role, together with its co-chaperonin GroES, plays an essential role in assisting protein folding. The GroEL-GroES system forms a nano-cage that allows encapsulation of the non-native substrate proteins and provides a physical environment optimized to promote and accelerate protein folding. This is Chaperonin GroEL 1 from Prochlorococcus marinus (strain MIT 9313).